Consider the following 375-residue polypeptide: F-box/kelch-repeat protein At4g39240 (375 aa).

Positions 1 to 15 (MPFSAASSSSVSSIA) are enriched in low complexity. The tract at residues 1–27 (MPFSAASSSSVSSIAEEPPPKKQHDPS) is disordered. In terms of domain architecture, F-box spans 31–77 (SSYLLLLPDEIILNCLARLPKCYYPVISLVSKTFRRLIASPEIYVER). Kelch repeat units follow at residues 140 to 186 (EIYV…FFDG), 187 to 232 (KLYV…RSFA), and 275 to 321 (KIYT…GNLA).

The protein is F-box/kelch-repeat protein At4g39240 of Arabidopsis thaliana (Mouse-ear cress).